A 535-amino-acid chain; its full sequence is T-complex protein 1 subunit zeta 2 (535 aa).

It belongs to the TCP-1 chaperonin family. Heterooligomeric complex of about 850 to 900 kDa that forms two stacked rings, 12 to 16 nm in diameter.

It is found in the cytoplasm. In terms of biological role, molecular chaperone; assists the folding of proteins upon ATP hydrolysis. Known to play a role, in vitro, in the folding of actin and tubulin. This is T-complex protein 1 subunit zeta 2 from Arabidopsis thaliana (Mouse-ear cress).